Consider the following 325-residue polypeptide: Acetyl-coenzyme A carboxylase carboxyl transferase subunit alpha (325 aa).

Residues 38-292 (KLEKRLHALE…DQVLEKSLKQ (255 aa)) enclose the CoA carboxyltransferase C-terminal domain.

Belongs to the AccA family. In terms of assembly, acetyl-CoA carboxylase is a heterohexamer composed of biotin carboxyl carrier protein (AccB), biotin carboxylase (AccC) and two subunits each of ACCase subunit alpha (AccA) and ACCase subunit beta (AccD).

The protein resides in the cytoplasm. The catalysed reaction is N(6)-carboxybiotinyl-L-lysyl-[protein] + acetyl-CoA = N(6)-biotinyl-L-lysyl-[protein] + malonyl-CoA. The protein operates within lipid metabolism; malonyl-CoA biosynthesis; malonyl-CoA from acetyl-CoA: step 1/1. In terms of biological role, component of the acetyl coenzyme A carboxylase (ACC) complex. First, biotin carboxylase catalyzes the carboxylation of biotin on its carrier protein (BCCP) and then the CO(2) group is transferred by the carboxyltransferase to acetyl-CoA to form malonyl-CoA. This Halalkalibacterium halodurans (strain ATCC BAA-125 / DSM 18197 / FERM 7344 / JCM 9153 / C-125) (Bacillus halodurans) protein is Acetyl-coenzyme A carboxylase carboxyl transferase subunit alpha.